Here is a 557-residue protein sequence, read N- to C-terminus: Organic cation/carnitine transporter 2 (557 aa).

The Cytoplasmic portion of the chain corresponds to 1–20; it reads MRDYDEVTAFLGEWGPFQRL. A helical transmembrane segment spans residues 21-41; that stretch reads IFFLLSASIIPNGFNGMSIVF. Topologically, residues 42–142 are extracellular; the sequence is LAGTPEHRCL…DLVCKDDWKA (101 aa). N-linked (GlcNAc...) asparagine glycans are attached at residues asparagine 57, asparagine 64, and asparagine 91. A helical membrane pass occupies residues 143 to 163; that stretch reads PLTTSLFFVGVLMGSFISGQL. At 164-172 the chain is on the cytoplasmic side; it reads SDRFGRKNV. The helical transmembrane segment at 173-193 threads the bilayer; it reads LFLTMGMQTGFSFLQLFSVNF. Over 194-197 the chain is Extracellular; it reads EMFT. Residues 198–218 traverse the membrane as a helical segment; the sequence is VLFVLVGMGQISNYVAAFVLG. 218–225 is an ATP binding site; the sequence is GTEILSKS. Residues 219 to 232 lie on the Cytoplasmic side of the membrane; that stretch reads TEILSKSIRIIFAT. Residues 233-253 traverse the membrane as a helical segment; that stretch reads LGVCIFYAFGFMVLPLFAYFI. At 254–257 the chain is on the extracellular side; it reads RDWR. A helical transmembrane segment spans residues 258–278; sequence MLLLALTVPGVLCGALWWFIP. The Cytoplasmic portion of the chain corresponds to 279–341; that stretch reads ESPRWLISQG…YDLVRTRNIR (63 aa). Residues 342-362 form a helical membrane-spanning segment; it reads IITIMSIILWLTISVGYFGLS. At 363–373 the chain is on the extracellular side; that stretch reads LDTPNLHGDIY. Residues 374 to 394 traverse the membrane as a helical segment; that stretch reads VNCFLLAAVEVPAYVLAWLLL. Over 395-406 the chain is Cytoplasmic; sequence QHLPRRYSISAA. Residues 407–427 traverse the membrane as a helical segment; that stretch reads LFLGGSVLLFIQLVPSELFYL. Over 428-430 the chain is Extracellular; that stretch reads STA. Residues 431–451 form a helical membrane-spanning segment; it reads LVMVGKFGITSAYSMVYVYTA. The Cytoplasmic portion of the chain corresponds to 452–462; it reads ELYPTVVRNMG. Residues 463-483 form a helical membrane-spanning segment; sequence VGVSSTASRLGSILSPYFVYL. At 484–488 the chain is on the extracellular side; sequence GAYDR. Tyrosine 486 is subject to Phosphotyrosine. The chain crosses the membrane as a helical span at residues 489–509; that stretch reads FLPYILMGSLTILTAILTLFF. The Cytoplasmic segment spans residues 510 to 557; sequence PESFGAPLPDTIDQMLRVKGIKQWQIQSQTRTQKDGGESPTVLKSTAF. The tract at residues 537-557 is disordered; it reads SQTRTQKDGGESPTVLKSTAF. Serine 548 carries the post-translational modification Phosphoserine. The residue at position 550 (threonine 550) is a Phosphothreonine.

This sequence belongs to the major facilitator (TC 2.A.1) superfamily. Organic cation transporter (TC 2.A.1.19) family. In terms of assembly, interacts with PDZK1. Expressed in the proximal and distal tubules and in the glomeruli in the kidney, in the myocardium, valves, and arterioles in the heart, in the labyrinthine layer of the placenta, and in the cortex, hippocampus, and cerebellum in the brain. Expressed in Sertoli cells in testis.

It is found in the cell membrane. The protein localises to the apical cell membrane. It localises to the basal cell membrane. The catalysed reaction is (R)-carnitine(out) + Na(+)(out) = (R)-carnitine(in) + Na(+)(in). It catalyses the reaction O-acetyl-(R)-carnitine(out) + Na(+)(out) = O-acetyl-(R)-carnitine(in) + Na(+)(in). It carries out the reaction O-propanoyl-(R)-carnitine(out) + Na(+)(out) = O-propanoyl-(R)-carnitine(in) + Na(+)(in). The enzyme catalyses glycine betaine(out) + Na(+)(out) = glycine betaine(in) + Na(+)(in). The catalysed reaction is glycine betaine(out) + (R)-carnitine(in) = glycine betaine(in) + (R)-carnitine(out). It catalyses the reaction O-butanoyl-(R)-carnitine(out) + Na(+)(out) = O-butanoyl-(R)-carnitine(in) + Na(+)(in). It carries out the reaction (S)-carnitine(out) + Na(+)(out) = (S)-carnitine(in) + Na(+)(in). The enzyme catalyses an O-acyl-(R)-carnitine(out) + Na(+)(out) = an O-acyl-(R)-carnitine(in) + Na(+)(in). The catalysed reaction is L-glutamyl-L-arginyl-glycyl-L-methionyl-L-threonine(out) + Na(+)(out) = L-glutamyl-L-arginyl-glycyl-L-methionyl-L-threonine(in) + Na(+)(in). It catalyses the reaction N,N-dimethylglycine(out) + Na(+)(out) = N,N-dimethylglycine(in) + Na(+)(in). With respect to regulation, inhibited by emetine, quinidine and verapamil. The IC(50) of emetine is 4.2 uM. Not inhibited by valproic acid. Transport of (R)-carnitine is stimulated by cholesterol in the plasma membrane. In terms of biological role, sodium-ion dependent, high affinity carnitine transporter. Involved in the active cellular uptake of carnitine. Transports one sodium ion with one molecule of carnitine. Also transports organic cations such as tetraethylammonium (TEA) without the involvement of sodium. Also relative uptake activity ratio of carnitine to TEA is 11.3. May also contribute to regulate the transport of organic compounds in testis across the blood-testis-barrier. The sequence is that of Organic cation/carnitine transporter 2 (Slc22a5) from Rattus norvegicus (Rat).